A 117-amino-acid polypeptide reads, in one-letter code: Non-specific lipid-transfer protein 1 (117 aa).

The N-terminal stretch at 1–25 (MAGLVKLSCLVLACMIVAGPIATNA) is a signal peptide. 4 cysteine pairs are disulfide-bonded: Cys-29–Cys-76, Cys-39–Cys-53, Cys-54–Cys-99, and Cys-74–Cys-113.

It belongs to the plant LTP family.

Functionally, plant non-specific lipid-transfer proteins transfer phospholipids as well as galactolipids across membranes. May play a role in wax or cutin deposition in the cell walls of expanding epidermal cells and certain secretory tissues. The protein is Non-specific lipid-transfer protein 1 (LTP1) of Brassica napus (Rape).